We begin with the raw amino-acid sequence, 254 residues long: Pre-miRNA 5'-monophosphate methyltransferase (254 aa).

The Bin3-type SAM domain maps to 34-254 (ENRLSLIPEA…DRSLLLFRRQ (221 aa)). Residues arginine 36, asparagine 66, aspartate 99, and 124–125 (DI) contribute to the S-adenosyl-L-methionine site.

This sequence belongs to the methyltransferase superfamily.

It is found in the cytoplasm. It catalyses the reaction a 5'-end 5'-phospho-ribonucleoside-RNA + S-adenosyl-L-methionine = a 5'-end (5'-methylphospho)-ribonucleoside-RNA + S-adenosyl-L-homocysteine. It carries out the reaction a 5'-end 5'-phospho-ribonucleoside-RNA + 2 S-adenosyl-L-methionine = a 5'-end (5'-bismethylphospho)-ribonucleoside-RNA + 2 S-adenosyl-L-homocysteine. Its function is as follows. O-methyltransferase that specifically monomethylates 5'-monophosphate of cytoplasmic histidyl tRNA (tRNA(His)), acting as a capping enzyme by protecting tRNA(His) from cleavage by DICER1. Also able, with less efficiently, to methylate the 5' monophosphate of a subset of pre-miRNAs, acting as a negative regulator of miRNA processing. The 5' monophosphate of pre-miRNAs is recognized by DICER1 and is required for pre-miRNAs processing: methylation at this position reduces the processing of pre-miRNAs by DICER1. Was also reported to mediate dimethylation of pre-miR-145; however dimethylation cannot be reproduced by another group which observes a monomethylation of pre-miR-145. The protein is Pre-miRNA 5'-monophosphate methyltransferase (bcdin3d) of Danio rerio (Zebrafish).